The following is an 871-amino-acid chain: Alanine--tRNA ligase (871 aa).

The Zn(2+) site is built by H561, H565, C665, and H669.

Belongs to the class-II aminoacyl-tRNA synthetase family. Requires Zn(2+) as cofactor.

Its subcellular location is the cytoplasm. The enzyme catalyses tRNA(Ala) + L-alanine + ATP = L-alanyl-tRNA(Ala) + AMP + diphosphate. Catalyzes the attachment of alanine to tRNA(Ala) in a two-step reaction: alanine is first activated by ATP to form Ala-AMP and then transferred to the acceptor end of tRNA(Ala). Also edits incorrectly charged Ser-tRNA(Ala) and Gly-tRNA(Ala) via its editing domain. This chain is Alanine--tRNA ligase, found in Dehalococcoides mccartyi (strain ATCC BAA-2100 / JCM 16839 / KCTC 5957 / BAV1).